Reading from the N-terminus, the 202-residue chain is Phospholipase A2 inhibitor gamma subunit A (202 aa).

The signal sequence occupies residues 1–19; that stretch reads MKSLQIICLLFIFVARGSC. 8 disulfides stabilise this stretch: Cys22–Cys47, Cys25–Cys32, Cys40–Cys68, Cys74–Cys95, Cys96–Cys101, Cys119–Cys144, Cys137–Cys166, and Cys170–Cys192.

It belongs to the CNF-like-inhibitor family. Heteromer composed of subunit A and subunit B. In terms of tissue distribution, expressed by the liver.

It is found in the secreted. Functionally, inhibits the enzymatic activity of the phospholipase A2 (PLA2). The polypeptide is Phospholipase A2 inhibitor gamma subunit A (Elaphe climacophora (Japanese rat snake)).